The following is a 571-amino-acid chain: MRTSQYLLSTQKETPADAEVISHQLMLRAGLVRKLASGLYTWLPTGLRVLNKVAQIVREEMDRAGSLEILMPVVQPADLWQESGRWDEYGPELLRIKDRHYRDFVLGPTHEEVVTALVKNEVSSYKQLPLNVYQVQTKFRDEVRPRFGVMRGREFTMKDAYSFHLSDECLNKTYDDMFAAYCRVFERINLEFRPVIADNGSIGGNASHEFHVLADSGEDDIAFSNASDYAANIEKAEALAPQFSRPAPSAELTKVATPNAKTIEQVSALLNIPAEQSVKTLIVLGEADNKGQQGLIALVLRGDHQLNELKAEKIDGVYAPLTMASEAQIEDTIGCSIGSIGPVGLNIPVIADRSAAVLADFVCGANENDVHYTGANWERDAKEFQEADIRNVQAGDPSPDGQGTLEIKRGIEVGHIFQLGSKYSEALNCGVLDENGKHQVLNMGCYGIGVSRIVAAAIEQNHDKYGIIWPDAIAPFKVAIVPMNMHKSHRIQQVAEDLYAQLKAAGVEVLFDDRKERPGVMFNDMELVGVPHTIVIGERNLDEQKVEYKNRRSGEKQLIDIPQLAEFVSTL.

The protein belongs to the class-II aminoacyl-tRNA synthetase family. ProS type 1 subfamily. In terms of assembly, homodimer.

The protein localises to the cytoplasm. It carries out the reaction tRNA(Pro) + L-proline + ATP = L-prolyl-tRNA(Pro) + AMP + diphosphate. Functionally, catalyzes the attachment of proline to tRNA(Pro) in a two-step reaction: proline is first activated by ATP to form Pro-AMP and then transferred to the acceptor end of tRNA(Pro). As ProRS can inadvertently accommodate and process non-cognate amino acids such as alanine and cysteine, to avoid such errors it has two additional distinct editing activities against alanine. One activity is designated as 'pretransfer' editing and involves the tRNA(Pro)-independent hydrolysis of activated Ala-AMP. The other activity is designated 'posttransfer' editing and involves deacylation of mischarged Ala-tRNA(Pro). The misacylated Cys-tRNA(Pro) is not edited by ProRS. The polypeptide is Proline--tRNA ligase (Pseudoalteromonas atlantica (strain T6c / ATCC BAA-1087)).